A 235-amino-acid polypeptide reads, in one-letter code: 7-cyano-7-deazaguanine synthase (235 aa).

13–23 lines the ATP pocket; that stretch reads FSGGLDSTTCL. Zn(2+)-binding residues include Cys197, Cys207, Cys210, and Cys213.

Belongs to the QueC family. It depends on Zn(2+) as a cofactor.

It carries out the reaction 7-carboxy-7-deazaguanine + NH4(+) + ATP = 7-cyano-7-deazaguanine + ADP + phosphate + H2O + H(+). It participates in purine metabolism; 7-cyano-7-deazaguanine biosynthesis. Functionally, catalyzes the ATP-dependent conversion of 7-carboxy-7-deazaguanine (CDG) to 7-cyano-7-deazaguanine (preQ(0)). The sequence is that of 7-cyano-7-deazaguanine synthase from Solidesulfovibrio magneticus (strain ATCC 700980 / DSM 13731 / RS-1) (Desulfovibrio magneticus).